A 92-amino-acid chain; its full sequence is uncharacterized protein (92 aa).

This is an uncharacterized protein from Haemophilus influenzae (strain ATCC 51907 / DSM 11121 / KW20 / Rd).